The primary structure comprises 100 residues: NAD(P)H-quinone oxidoreductase subunit 4L, chloroplastic (100 aa).

The next 3 helical transmembrane spans lie at 1-21, 29-49, and 63-83; these read MLEH…YGLI, ALMC…TFSN, and IFVT…ALAI.

This sequence belongs to the complex I subunit 4L family. In terms of assembly, NDH is composed of at least 16 different subunits, 5 of which are encoded in the nucleus.

It is found in the plastid. The protein localises to the chloroplast thylakoid membrane. It carries out the reaction a plastoquinone + NADH + (n+1) H(+)(in) = a plastoquinol + NAD(+) + n H(+)(out). The enzyme catalyses a plastoquinone + NADPH + (n+1) H(+)(in) = a plastoquinol + NADP(+) + n H(+)(out). Functionally, NDH shuttles electrons from NAD(P)H:plastoquinone, via FMN and iron-sulfur (Fe-S) centers, to quinones in the photosynthetic chain and possibly in a chloroplast respiratory chain. The immediate electron acceptor for the enzyme in this species is believed to be plastoquinone. Couples the redox reaction to proton translocation, and thus conserves the redox energy in a proton gradient. This is NAD(P)H-quinone oxidoreductase subunit 4L, chloroplastic from Cycas taitungensis (Prince sago).